Consider the following 391-residue polypeptide: ATP-sensitive inward rectifier potassium channel 1 (391 aa).

At 1–77 (MNASSRNVFD…IWTTVLDLKW (77 aa)) the chain is on the cytoplasmic side. Ser44 carries the phosphoserine; by SGK1 modification. Residues 78–102 (RYKMTIFITAFLGSWFFFGLLWYAV) traverse the membrane as a helical segment. Over 103–127 (AYIHKDLPEFHPSANHTPCVENING) the chain is Extracellular. Asn117 is a glycosylation site (N-linked (GlcNAc...) asparagine). Residues 128–139 (LTSAFLFSLETQ) constitute an intramembrane region (helical; Pore-forming). Positions 140–146 (VTIGYGF) form an intramembrane region, pore-forming. Residues 141 to 146 (TIGYGF) carry the Selectivity filter motif. At 147–155 (RCVTEQCAT) the chain is on the extracellular side. A helical membrane pass occupies residues 156–177 (AIFLLIFQSILGVIINSFMCGA). Over 178–391 (ILAKISRPKK…EVNETDDTKM (214 aa)) the chain is Cytoplasmic. The segment at 180 to 207 (AKISRPKKRAKTITFSKNAVISKRGGKL) is polyphosphoinositide (PIP2)-binding. Residue 223–230 (GSHIYGKL) participates in ATP binding.

It belongs to the inward rectifier-type potassium channel (TC 1.A.2.1) family. KCNJ1 subfamily. In terms of assembly, interacts with SGK1 and SLC9A3R2/NHERF2. In terms of processing, phosphorylation at Ser-44 by SGK1 is necessary for its expression at the cell membrane. As to expression, in the kidney and pancreatic islets. Lower levels in skeletal muscle, pancreas, spleen, brain, heart and liver.

The protein resides in the cell membrane. It catalyses the reaction K(+)(in) = K(+)(out). Its activity is regulated as follows. Inhibited by WNK3. Activated by phosphatidylinositol 4,5 biphosphate (PtdIns(4,5)P2). In terms of biological role, inward rectifier potassium channels are characterized by a greater tendency to allow potassium to flow into the cell rather than out of it. Their voltage dependence is regulated by the concentration of extracellular potassium; as external potassium is raised, the voltage range of the channel opening shifts to more positive voltages. The inward rectification is mainly due to the blockage of outward current by internal magnesium. This channel is activated by internal ATP and can be blocked by external barium. In the kidney, probably plays a major role in potassium homeostasis. This is ATP-sensitive inward rectifier potassium channel 1 (KCNJ1) from Homo sapiens (Human).